The following is a 473-amino-acid chain: Glucose-1-phosphate adenylyltransferase small subunit, chloroplastic/amyloplastic (473 aa).

The disordered stretch occupies residues 1–36 (MDVPLASKTFPSPSPSKREQCNIDGHKSSSKHADLN). Residues 16–36 (SKREQCNIDGHKSSSKHADLN) are compositionally biased toward basic and acidic residues.

The protein belongs to the bacterial/plant glucose-1-phosphate adenylyltransferase family. As to quaternary structure, heterotetramer. Abundantly expressed in the whole grains, a slightly less abundant expression is seen in leaves, while a low level expression is seen in the roots. A greater expression is seen in the endosperm than in the embryo and pericarp layers.

The protein localises to the plastid. It is found in the chloroplast. Its subcellular location is the amyloplast. The catalysed reaction is alpha-D-glucose 1-phosphate + ATP + H(+) = ADP-alpha-D-glucose + diphosphate. Its pathway is glycan biosynthesis; starch biosynthesis. Insensitive to 3'phosphoglycerate and orthophosphate. In terms of biological role, this protein plays a role in synthesis of starch. It catalyzes the synthesis of the activated glycosyl donor, ADP-glucose from Glc-1-P and ATP. In Triticum aestivum (Wheat), this protein is Glucose-1-phosphate adenylyltransferase small subunit, chloroplastic/amyloplastic (AGP-S).